Here is a 552-residue protein sequence, read N- to C-terminus: Capsid protein precursor (552 aa).

Positions 1 to 41 (MKQNDTKKTTQRRNSKKYSSKTNRGTKRAPRDQEVGTGAQE) are disordered. Residues 9-28 (TTQRRNSKKYSSKTNRGTKR) are compositionally biased toward basic residues.

In terms of assembly, homodimer. The 7 kDa polypeptide is acetylated. Post-translationally, autocatalytic proteolysis releases a post-translationally modified peptide that remains associated with nucleic acid within the virion. This peptide is observed only when nucleic acid is packaged in the capsid.

Its subcellular location is the virion. Its function is as follows. The capsid protein self-assembles to form an icosahedral capsid with a T=2 symmetry made of 120 subunits. This is Capsid protein precursor (Segment-1) from Human picobirnavirus (strain Human/Thailand/Hy005102/-) (PBV).